Reading from the N-terminus, the 171-residue chain is NADH-ubiquinone oxidoreductase chain 6 (171 aa).

The next 5 membrane-spanning stretches (helical) occupy residues M1–K21, I25–G44, F49–A71, V85–M105, and W150–I170.

It belongs to the complex I subunit 6 family. In terms of assembly, core subunit of respiratory chain NADH dehydrogenase (Complex I) which is composed of 45 different subunits.

It localises to the mitochondrion inner membrane. The enzyme catalyses a ubiquinone + NADH + 5 H(+)(in) = a ubiquinol + NAD(+) + 4 H(+)(out). Core subunit of the mitochondrial membrane respiratory chain NADH dehydrogenase (Complex I) which catalyzes electron transfer from NADH through the respiratory chain, using ubiquinone as an electron acceptor. Essential for the catalytic activity and assembly of complex I. In Lemur catta (Ring-tailed lemur), this protein is NADH-ubiquinone oxidoreductase chain 6 (MT-ND6).